Consider the following 90-residue polypeptide: Small ribosomal subunit protein uS15 (90 aa).

It belongs to the universal ribosomal protein uS15 family. In terms of assembly, part of the 30S ribosomal subunit. Forms a bridge to the 50S subunit in the 70S ribosome, contacting the 23S rRNA.

Its function is as follows. One of the primary rRNA binding proteins, it binds directly to 16S rRNA where it helps nucleate assembly of the platform of the 30S subunit by binding and bridging several RNA helices of the 16S rRNA. In terms of biological role, forms an intersubunit bridge (bridge B4) with the 23S rRNA of the 50S subunit in the ribosome. In Campylobacter fetus subsp. fetus (strain 82-40), this protein is Small ribosomal subunit protein uS15.